The chain runs to 545 residues: Sphingosine-1-phosphate lyase (545 aa).

Over 1–26 the chain is Lumenal; the sequence is MRPFSGSDCLKPVTEGINRAFGAKEP. The helical; Signal-anchor for type III membrane protein transmembrane segment at 27-47 threads the bilayer; it reads WQVATITATTVLGGVWLWTVI. The Cytoplasmic portion of the chain corresponds to 48 to 545; sequence CQDENLYIRG…HSMYYTPSQK (498 aa). Lys342 is modified (N6-(pyridoxal phosphate)lysine).

The protein belongs to the group II decarboxylase family. Sphingosine-1-phosphate lyase subfamily. Pyridoxal 5'-phosphate serves as cofactor. Localized to the developing gut primordium during embryogenesis.

It localises to the endoplasmic reticulum membrane. The catalysed reaction is sphinganine 1-phosphate = hexadecanal + phosphoethanolamine. The protein operates within lipid metabolism; sphingolipid metabolism. Functionally, cleaves phosphorylated sphingoid bases (PSBs), such as sphingosine-1-phosphate, into fatty aldehydes and phosphoethanolamine. Sphingolipid catabolism is required for normal development including viability, reproduction and muscle development. The chain is Sphingosine-1-phosphate lyase from Drosophila melanogaster (Fruit fly).